Here is a 909-residue protein sequence, read N- to C-terminus: MLSNLLKGIFGSRNDRLVKQYSRIVRTINELEAVISPLSDEELRDKTSEFKQRISNGEKLDQLLPEAFAVVREASKRVLGMRHFDVQLIGGMVLHEGKIAEMRTGEGKTLMATLPIYLNALSGKGVHIVTVNDYLAKRDAEWMGQIYQFLGLSVGVVLSQMPHEDKQAAYGADITYGTNNEYGFDYLRDNMVGHSAERVQRVLNFAIVDEVDSILIDEARTPLIISGMAEGDTEVYKRVDVLIPRLTRQKDENSPGDYSVDEKTQQVLLSEEGFIHAEKLLGEVGLLPAESSLYDPANITLIHHLNAGLRAHALYNRDQHYVVQNDEVVIVDEFTGRLMPGRRWSEGLHQAVEAKENVSIQKENQTLASITFQNYFRMYEKLAGMTGTADTEAFEFQQIYGLETVVIPTHRPIAREDRMDQVFRTAREKYQAIIADIKSCYERGQPVLVGTGSIENNELLSTMLTKEKLPHQVLNAKQHEREADIIAQAGQSKMVTIATNMAGRGTDIVLGGNLEQVINRIRVDDALDDMTKTEKIKETRQAWQVRHDEVIKLGGLHIIGTERHESRRIDNQLRGRSGRQGDPGSSRFYLSLEDPLLRIFSSDRVANIMTRLKMPEGEAIEHPWVTRAIENAQRKVEARNFDIRKQLLEYDDVANDQRKVIYQQRNELLDAEQGISETVSAIRESVINQLIGLYIPAQSIEEQWDVPGLEKALASEFLLRIPVQEWLEADSELHEENLRSRIMESVNTSYQGKVEQVGASIMNQYERMVMLHSIDSHWREHLAALDHLRQGIHLRGYAQQNPKQEYKREAFELFAGMLDAIKADVTKILMTVQIRSEQQVESVAETSTPKNLQYHHAAYSEAEEEHQSVTEGHEAKQQPFVRKSDKIGRNDPCPCGSGRKYKQCHGKLD.

ATP-binding positions include glutamine 87, 105–109 (GEGKT), and aspartate 507. 2 disordered regions span residues 567-586 (RRID…PGSS) and 859-909 (YSEA…GKLD). Over residues 865–889 (EHQSVTEGHEAKQQPFVRKSDKIGR) the composition is skewed to basic and acidic residues. The Zn(2+) site is built by cysteine 893, cysteine 895, cysteine 904, and histidine 905. Basic residues predominate over residues 899–909 (RKYKQCHGKLD).

This sequence belongs to the SecA family. Monomer and homodimer. Part of the essential Sec protein translocation apparatus which comprises SecA, SecYEG and auxiliary proteins SecDF-YajC and YidC. Requires Zn(2+) as cofactor.

Its subcellular location is the cell inner membrane. The protein resides in the cytoplasm. It catalyses the reaction ATP + H2O + cellular proteinSide 1 = ADP + phosphate + cellular proteinSide 2.. Functionally, part of the Sec protein translocase complex. Interacts with the SecYEG preprotein conducting channel. Has a central role in coupling the hydrolysis of ATP to the transfer of proteins into and across the cell membrane, serving both as a receptor for the preprotein-SecB complex and as an ATP-driven molecular motor driving the stepwise translocation of polypeptide chains across the membrane. The protein is Protein translocase subunit SecA of Nitrosomonas eutropha (strain DSM 101675 / C91 / Nm57).